Reading from the N-terminus, the 147-residue chain is Ubiquitin-conjugating enzyme E2 4 (147 aa).

A UBC core domain is found at 1 to 147 (MSLKRINKEL…AKEWTKKYAV (147 aa)). Residue cysteine 85 is the Glycyl thioester intermediate of the active site.

It belongs to the ubiquitin-conjugating enzyme family.

It carries out the reaction S-ubiquitinyl-[E1 ubiquitin-activating enzyme]-L-cysteine + [E2 ubiquitin-conjugating enzyme]-L-cysteine = [E1 ubiquitin-activating enzyme]-L-cysteine + S-ubiquitinyl-[E2 ubiquitin-conjugating enzyme]-L-cysteine.. Its pathway is protein modification; protein ubiquitination. Functionally, E2 ubiquitin-conjugating enzyme that catalyzes the covalent attachment of ubiquitin to other proteins. Mediates the selective degradation of short-lived and abnormal proteins. Mediates ubiquitination of PEX5. In Candida albicans (Yeast), this protein is Ubiquitin-conjugating enzyme E2 4 (UBC4).